Reading from the N-terminus, the 529-residue chain is MDSDEGYNYEFDDEEECSEESGADEHEDELELGEVELVEAGLSGSERAGLCGEGGGSALGPGPGGEEDEDYRYEVLTAEQILQHMVECIREVNEVIQNPATITRILLSHFNWDKEKLMERYFDGNLEKLFSECHVINPSKKSRTRQMNTRSSALDMPCQICYLNYPNSYFTGLECGHKFCMQCWGEYLTTKIIEEGMGQTISCPAHGCDILVDDNTVMRLITDSKVKLKYQHLITNSFVECNRLLKWCPAPDCHHVVKVQYPDAKPVHCKCGRQFCFNCGENWHDPVKCKWLRKWIKKCDDDSETSNWIAANTKECPKCHVTIEKDGGCNHMVCRNQNCKAEFCWVCLGPWEPHGSAWYNCNRYNEDDAKAARDAQERSRAALQRYLFYCNRYMNHMQSLRFEHKLYAQVKQKMEEMQQHNMSWIEVQFLKKAVDVLCQCRSTLMYTYVFAFYLKKNNQSIIFENNQADLENATEVLSGYLERDISQDSLQDIKQKVQDKYRYCESRRRVLLLHVHEGYEKDLWEYIED.

2 disordered regions span residues 1–29 (MDSD…HEDE) and 46–69 (ERAG…EEDE). Positions 51–64 (CGEGGGSALGPGPG) are enriched in gly residues. The tract at residues 77 to 125 (TAEQILQHMVECIREVNEVIQNPATITRILLSHFNWDKEKLMERYFDGN) is UBA-like. A TRIAD supradomain region spans residues 154-365 (LDMPCQICYL…SAWYNCNRYN (212 aa)). Zn(2+) contacts are provided by Cys-158, Cys-161, Cys-175, His-177, Cys-180, Cys-183, Cys-203, Cys-208, Cys-248, Cys-253, Cys-269, Cys-271, Cys-276, Cys-279, His-284, Cys-289, Cys-316, and Cys-319. The RING-type 1 zinc finger occupies 158-208 (CQICYLNYPNSYFTGLECGHKFCMQCWGEYLTTKIIEEGMGQTISCPAHGC). An IBR-type zinc finger spans residues 228 to 289 (LKYQHLITNS…GENWHDPVKC (62 aa)). The RING-type 2; atypical zinc finger occupies 316 to 347 (CPKCHVTIEKDGGCNHMVCRNQNCKAEFCWVC). Cys-329 is an active-site residue. Residues Cys-334, Cys-339, Cys-344, Cys-347, His-354, and Cys-361 each contribute to the Zn(2+) site. Positions 380 to 529 (RAALQRYLFY…EKDLWEYIED (150 aa)) are ariadne domain.

Belongs to the RBR family. Ariadne subfamily. Interacts (via the first RING-type zinc finger) with ube2l3. Associates with cullin-RING ubiquitin ligase (CRL) complexes containing neddylated cullin.

The protein resides in the cytoplasm. The protein localises to the nucleus. It catalyses the reaction [E2 ubiquitin-conjugating enzyme]-S-ubiquitinyl-L-cysteine + [acceptor protein]-L-lysine = [E2 ubiquitin-conjugating enzyme]-L-cysteine + [acceptor protein]-N(6)-ubiquitinyl-L-lysine.. It participates in protein modification; protein ubiquitination. With respect to regulation, autoinhibited by the ariadne domain, which masks the second RING-type zinc finger that contains the active site and inhibits the E3 activity. Inhibition is relieved upon binding to neddylated cullin-RING ubiquitin ligase complexes, which activate the E3 ligase activity of ARIH1. In terms of biological role, E3 ubiquitin-protein ligase, which catalyzes ubiquitination of target proteins together with ubiquitin-conjugating enzyme E2 ube2l3. Acts as an atypical E3 ubiquitin-protein ligase by working together with cullin-RING ubiquitin ligase (CRL) complexes and initiating ubiquitination of CRL substrates: associates with CRL complexes and specifically mediates addition of the first ubiquitin on CRLs targets. The initial ubiquitin is then elongated. E3 ubiquitin-protein ligase activity is activated upon binding to neddylated cullin-RING ubiquitin ligase complexes. This Xenopus laevis (African clawed frog) protein is E3 ubiquitin-protein ligase arih1 (arih1).